A 176-amino-acid polypeptide reads, in one-letter code: Glutathione-regulated potassium-efflux system ancillary protein KefF (176 aa).

FMN-binding positions include H8, 14–17 (SHAN), 65–68 (MQWY), and 105–108 (TTGG).

It belongs to the NAD(P)H dehydrogenase (quinone) family. KefF subfamily. In terms of assembly, homodimer. Interacts with KefC. FMN serves as cofactor.

Its subcellular location is the cell inner membrane. It carries out the reaction a quinone + NADH + H(+) = a quinol + NAD(+). It catalyses the reaction a quinone + NADPH + H(+) = a quinol + NADP(+). Functionally, regulatory subunit of a potassium efflux system that confers protection against electrophiles. Required for full activity of KefC. Shows redox enzymatic activity, but this enzymatic activity is not required for activation of KefC. The polypeptide is Glutathione-regulated potassium-efflux system ancillary protein KefF (Salmonella gallinarum (strain 287/91 / NCTC 13346)).